The following is a 186-amino-acid chain: Peptidyl-tRNA hydrolase (186 aa).

Residue Tyr-14 participates in tRNA binding. The active-site Proton acceptor is His-19. TRNA is bound by residues Tyr-64, Asn-66, and Asn-112.

Belongs to the PTH family. Monomer.

The protein resides in the cytoplasm. The catalysed reaction is an N-acyl-L-alpha-aminoacyl-tRNA + H2O = an N-acyl-L-amino acid + a tRNA + H(+). In terms of biological role, hydrolyzes ribosome-free peptidyl-tRNAs (with 1 or more amino acids incorporated), which drop off the ribosome during protein synthesis, or as a result of ribosome stalling. Its function is as follows. Catalyzes the release of premature peptidyl moieties from peptidyl-tRNA molecules trapped in stalled 50S ribosomal subunits, and thus maintains levels of free tRNAs and 50S ribosomes. This is Peptidyl-tRNA hydrolase from Bacillus cytotoxicus (strain DSM 22905 / CIP 110041 / 391-98 / NVH 391-98).